The sequence spans 776 residues: Kinesin-like protein KLP1 (776 aa).

A Kinesin motor domain is found at 5–335 (AVKVFVRTRP…LRFASRVRTL (331 aa)). Residue 91 to 98 (GQTGAGKT) participates in ATP binding. The stretch at 348 to 371 (ALLLRRYERQIKELKAELAMRDTL) forms a coiled coil. The segment at 441 to 535 (RRATEEGSGA…SNWGDAGPLS (95 aa)) is disordered. Over residues 447 to 460 (GSGAAARGGDSAGP) the composition is skewed to low complexity. Residues 579 to 657 (ALADTKASIR…SLKSAREELE (79 aa)) adopt a coiled-coil conformation. Residues 658 to 776 (PQIQAVAVAR…TQAVNRGLAR (119 aa)) form a globular region.

Belongs to the TRAFAC class myosin-kinesin ATPase superfamily. Kinesin family.

It is found in the cytoplasm. It localises to the cytoskeleton. Its subcellular location is the flagellum axoneme. Functionally, may play a role in rotation or twisting of the central pair microtubules of the flagella axoneme. This Chlamydomonas reinhardtii (Chlamydomonas smithii) protein is Kinesin-like protein KLP1 (KLP1).